Reading from the N-terminus, the 530-residue chain is Type II methyltransferase M.MjaII (530 aa).

The protein belongs to the N(4)/N(6)-methyltransferase family. N(4) subfamily.

It catalyses the reaction a 2'-deoxycytidine in DNA + S-adenosyl-L-methionine = an N(4)-methyl-2'-deoxycytidine in DNA + S-adenosyl-L-homocysteine + H(+). In terms of biological role, an alpha subtype methylase that recognizes the double-stranded sequence 5'-GGNCC-3', methylates C-5 on both strands, and protects the DNA from cleavage by the MjaII endonuclease. The sequence is that of Type II methyltransferase M.MjaII (mjaIIM) from Methanocaldococcus jannaschii (strain ATCC 43067 / DSM 2661 / JAL-1 / JCM 10045 / NBRC 100440) (Methanococcus jannaschii).